The chain runs to 409 residues: Testis-expressed protein 13A (409 aa).

The interval 92–408 is required for repression of transcription; that stretch reads WLHGFAKLHK…CGKGIWLQKP (317 aa). Residues 347–374 are disordered; sequence GGPHRIDHQEHPRDRRYSEPHQQRPPVY. The span at 348 to 368 shows a compositional bias: basic and acidic residues; that stretch reads GPHRIDHQEHPRDRRYSEPHQ. The RanBP2-type zinc-finger motif lies at 376–400; that stretch reads RPGDWDCPWCNAVNFSRRDTCFDCG. Zn(2+) is bound by residues Cys382, Cys385, Cys396, and Cys399.

Belongs to the TEX13 family. As to quaternary structure, interacts with CNOT1; the interaction may inhibit CNOT1 binding to mRNA and subsequently CNOT1-mediated mRNA degradation. As to expression, testis specific.

Binds to ssRNA containing the consensus sequence 5'-AGGUAA-3'. Plays a role in transcriptional repression. Required for rapid sperm motility and timely degradation of mRNA via its interaction with CNOT1. In Homo sapiens (Human), this protein is Testis-expressed protein 13A.